The following is a 142-amino-acid chain: Multiprotein-bridging factor 1a (142 aa).

A compositionally biased stretch (polar residues) spans 51-64 (GTNKAASSGTSLNT). Residues 51 to 77 (GTNKAASSGTSLNTKMLDDDTENLTHE) are disordered. The region spanning 87 to 141 (IMQARTDKKLTQSQLAQIINEKPQVIQEYESGKAIPNQQILSKLERALGAKLRGK) is the HTH cro/C1-type domain. The segment at residues 98–117 (QSQLAQIINEKPQVIQEYES) is a DNA-binding region (H-T-H motif).

This sequence belongs to the MBF1 family. As to expression, expressed in leaves, roots, stems, flowers, siliques and shoots. Detected only in anthers and some seeds in siliques.

Its subcellular location is the nucleus. It localises to the nucleolus. Its function is as follows. Transcriptional coactivator that stimulates transcriptional activity by bridging regulatory proteins and TBP, thereby recruiting TBP to promoters occupied by DNA-binding regulators. The sequence is that of Multiprotein-bridging factor 1a (MBF1A) from Arabidopsis thaliana (Mouse-ear cress).